Consider the following 582-residue polypeptide: Hemagglutinin-neuraminidase (582 aa).

A helical transmembrane segment spans residues Ile-35–Leu-55. Cystine bridges form between Cys-178-Cys-202, Cys-192-Cys-253, and Cys-244-Cys-257. Asn-284 and Asn-329 each carry an N-linked (GlcNAc...) asparagine; by host glycan. 3 disulfides stabilise this stretch: Cys-350-Cys-471, Cys-382-Cys-392, and Cys-465-Cys-475. N-linked (GlcNAc...) asparagine; by host glycans are attached at residues Asn-400 and Asn-448. Asn-507 carries an N-linked (GlcNAc...) asparagine; by host glycan. A disulfide bond links Cys-545 and Cys-556.

The protein belongs to the paramyxoviruses hemagglutinin-neuraminidase family. As to quaternary structure, homodimer. Further forms homotetramer (dimer of dimers). Interacts with F protein trimer.

It localises to the virion membrane. It is found in the host cell membrane. It catalyses the reaction Hydrolysis of alpha-(2-&gt;3)-, alpha-(2-&gt;6)-, alpha-(2-&gt;8)- glycosidic linkages of terminal sialic acid residues in oligosaccharides, glycoproteins, glycolipids, colominic acid and synthetic substrates.. Its function is as follows. Attaches the virus to alpha-2,3-linked sialic acid-containing cell receptors and thereby initiating infection. Binding of HN protein to the receptor induces a conformational change that allows the F protein to trigger virion/cell membranes fusion. Binds to the glycan motifs sialyl Lewis (SLe) and GM2 ganglioside (GM2-glycan). Functionally, neuraminidase activity ensures the efficient spread of the virus by dissociating the mature virions from the neuraminic acid containing glycoproteins. This Homo sapiens (Human) protein is Hemagglutinin-neuraminidase (HN).